The primary structure comprises 392 residues: MASVEEIRNAQRAKGPATILAIGTATPDHCVYQSDYADYYFKVTKSEHMTELKKKFNRICDKSMIKKRYIHLTEEMLEEHPNIGAYMAPSLNIRQEIITAEVPKLGKEAALKALKEWGQPKSKITHLVFCTTSGVEMPGADYKLANLLGLETSVRRVMLYHQGCYAGGTVLRTAKDLAENNAGARVLVVCSEITVVTFRGPSEDALDSLVGQALFGDGSAAVIVGSDPNVSIERPLFQLVSAAQTFIPNSAGAIAGNLREVGLTFHLWPNVPTLISENIEKCLSQAFDPLGISNWNSLFWIAHPGGPAILDAVEAKLNLEKKKLEATRHVLSEYGNMSSACVLFILDEMRKKSLKGEKATTGEGLDWGVLFGFGPGLTIETVVLHSVPMVTN.

55 to 58 (KFNR) provides a ligand contact to substrate. Residue Cys164 is part of the active site. Residues Leu267 and 305–307 (GGP) contribute to the substrate site.

The protein belongs to the thiolase-like superfamily. Chalcone/stilbene synthases family. Homodimer.

It localises to the cytoplasm. It carries out the reaction 4-coumaroyl-CoA + 3 malonyl-CoA + 3 H(+) = trans-resveratrol + 4 CO2 + 4 CoA. The protein operates within phytoalexin biosynthesis; 3,4',5-trihydroxystilbene biosynthesis; 3,4',5-trihydroxystilbene from trans-4-coumarate: step 2/2. Mediates resistance to pathogens which are sensitive to stilbenes. The polypeptide is Stilbene synthase 5 (Vitis vinifera (Grape)).